We begin with the raw amino-acid sequence, 348 residues long: Farnesoic acid carboxyl-O-methyltransferase (348 aa).

Y16 is an S-adenosyl-L-methionine binding site. Substrate-binding positions include Y16 and 19–23; that span reads HSKYQ. S-adenosyl-L-methionine is bound by residues G57, 57-58, N63, 94-97, 123-125, and 140-142; these read GC, FNDS, SFF, and SYS. 141 to 145 contacts substrate; sequence YSLHF. Mg(2+)-binding residues include N162, D247, and F249.

It belongs to the methyltransferase superfamily. SABATH family. Homodimer. The cofactor is Mg(2+). As to expression, mostly expressed in leaves and, at very low levels, in roots, stems, flowers and siliques.

It carries out the reaction (2E,6E)-farnesoate + S-adenosyl-L-methionine = methyl (2E,6E)-farnesoate + S-adenosyl-L-homocysteine. The enzyme catalyses juvenile hormone III carboxylate + S-adenosyl-L-methionine = juvenile hormone III + S-adenosyl-L-homocysteine. The protein operates within sesquiterpene biosynthesis. Activated by Mn(2+) ions. Strongly inhibited by Cu(2+), Zn(2+), Fe(3+) and Fe(2+) ions. Moderately inhibited by Na(+) and Ca(2+) ions. Rapidly degraded at temperatures above 40 degrees Celsius. Functionally, may catalyze the production of the insect juvenile hormone methyl farnesoate (MeFA) to trigger defense against insect herbivory. This is Farnesoic acid carboxyl-O-methyltransferase from Arabidopsis thaliana (Mouse-ear cress).